Reading from the N-terminus, the 526-residue chain is pH-sensitive chloride channel 2 (526 aa).

The signal sequence occupies residues 1-18 (MDTLGIFVLISYLGLSSA). Residues 19 to 300 (AGVHLGDLQQ…VLLTREVGYY (282 aa)) lie on the Extracellular side of the membrane. Residues Asn-33, Asn-42, Asn-52, Asn-192, Asn-231, Asn-264, Asn-271, and Asn-283 are each glycosylated (N-linked (GlcNAc...) asparagine). The helical transmembrane segment at 301–321 (VIDYFLPSIMIVTISWVSFWL) threads the bilayer. At 322 to 327 (QADQTP) the chain is on the cytoplasmic side. The helical transmembrane segment at 328 to 347 (ARTTLGCTTLLSFITLSLSQ) threads the bilayer. Topologically, residues 348–360 (ENNLMKVSYVTMS) are extracellular. Residues 361–381 (EVWFLVCTIFIFGSLVEFAFV) traverse the membrane as a helical segment. At 382–505 (NTIWRRNNDL…VSLWIDRKMR (124 aa)) the chain is on the cytoplasmic side. The segment at 463–488 (ISLDEQDETSTSESSDSSKEKPAQTF) is disordered. The chain crosses the membrane as a helical span at residues 506 to 526 (FVFPLSFIVFNALFWTLVYCL).

It belongs to the ligand-gated ion channel (TC 1.A.9) family. In terms of tissue distribution, in third-instar larvae, expressed in the principal cells of the excretory Malpighian tubules (at protein level). Also detected in the enterocytes of the copper cell region and the iron cell region of the larval midgut (at protein level). In the copper cell region expression is confined to the interstitial cells and in the iron cell region it is expressed in the anterior portion (at protein level). Expressed in the Malpighian tubules and the middle midgut of third instar larvae and adults.

The protein resides in the apical cell membrane. Its subcellular location is the cell projection. It is found in the microvillus membrane. The protein localises to the late endosome membrane. It localises to the lysosome membrane. The enzyme catalyses chloride(in) = chloride(out). Its function is as follows. Ligand and pH-gated channel that mediates chloride transport primarily in the mid-gut and thereby functions in larval metabolism and fluid homeostasis. Channel opening is triggered by zinc binding or, to a lesser extent, an increase in extracellular pH. Zinc-dependent activity in the mid-gut is required for modulating Tor-dependent metabolic programs that promote larval feeding and systematic growth. It may therefore act as an intestinal zinc sensor that mediates larval growth and metabolism in response to micronutrient availability. Activates Tor signaling via its activity in maintaining lysosome homeostasis in interstitial cells and/or by its role in activating the release of insulin-like peptides in the brain after feeding, via an unknown mechanism. Functions in lysosome homeostasis by regulating chloride transport into enterocyte lysosomes to sustain V-ATPase function which maintains lysosomal acidification and consequently promotes Tor activation at the lysosome membrane. Also appears to play a role in regulating fluid secretion and osmotic homeostasis in Malpighian tubules in response to the pH of extracellular urine. This function is important for proper urine production during diuresis. The sequence is that of pH-sensitive chloride channel 2 from Drosophila melanogaster (Fruit fly).